The chain runs to 311 residues: Mitoferrin (311 aa).

Solcar repeat units lie at residues 15 to 102 (HSIP…MKSF), 111 to 195 (EHTL…WQQV), and 202 to 302 (YDPK…FKFM). The next 6 helical transmembrane spans lie at 17-36 (IPVHLAAGALAGAVEHCVMF), 77-96 (GVNAVAAGSMPAHALYFTVY), 112-132 (HTLAYGASGVVATLIHDAVMN), 170-189 (SYTTQLAMNVPFQAIHFMGY), 204-223 (PKSHLIAGGLAGGLAAAVTT), and 277-296 (GLQARVIFQVPATALSWSVY).

Belongs to the mitochondrial carrier (TC 2.A.29) family.

The protein localises to the mitochondrion inner membrane. Mitochondrial iron transporter that mediates iron uptake. Probably required for heme synthesis of hemoproteins and Fe-S cluster assembly. In Caenorhabditis briggsae, this protein is Mitoferrin.